The chain runs to 202 residues: Coiled-coil domain-containing protein 69 (202 aa).

Basic residues predominate over residues M1–G11. Disordered regions lie at residues M1–T20 and G32–Q52. Residue G2 is the site of N-myristoyl glycine attachment. Residues G32–A42 show a composition bias toward basic and acidic residues. S92 is subject to Phosphoserine. The stretch at W112–K146 forms a coiled coil.

The protein belongs to the CCDC69 family.

The protein resides in the cytoplasm. The protein localises to the cytoskeleton. Its subcellular location is the spindle. It is found in the midbody. Its function is as follows. May act as a scaffold to regulate the recruitment and assembly of spindle midzone components. Required for the localization of AURKB and PLK1 to the spindle midzone. The polypeptide is Coiled-coil domain-containing protein 69 (Ccdc69) (Mus musculus (Mouse)).